The sequence spans 289 residues: Probable protein phosphatase 2C 39 (289 aa).

In terms of domain architecture, PPM-type phosphatase spans 41–288; it reads THGFHLVKGK…DDISVVVVKF (248 aa). Residues D78, G79, D240, and D279 each contribute to the Mn(2+) site.

It belongs to the PP2C family. Mg(2+) serves as cofactor. Requires Mn(2+) as cofactor.

The catalysed reaction is O-phospho-L-seryl-[protein] + H2O = L-seryl-[protein] + phosphate. It carries out the reaction O-phospho-L-threonyl-[protein] + H2O = L-threonyl-[protein] + phosphate. In Arabidopsis thaliana (Mouse-ear cress), this protein is Probable protein phosphatase 2C 39.